Reading from the N-terminus, the 283-residue chain is Putative Ig-like domain-containing protein ORF10 (283 aa).

An N-terminal signal peptide occupies residues 1–55; it reads MIDKRNKKAVTHISTCLCHSSIPIYGDSPFLNTHRAAMDPRPLVLLLLLASHIST. Asn-75, Asn-92, Asn-121, Asn-157, Asn-179, Asn-198, Asn-223, and Asn-229 each carry an N-linked (GlcNAc...) asparagine; by host glycan. In terms of domain architecture, Ig-like spans 129–227; that stretch reads QPLGQSIHHA…IDQQTNLTLT (99 aa).

The protein is Putative Ig-like domain-containing protein ORF10 of Galliformes (FAdV-1).